We begin with the raw amino-acid sequence, 566 residues long: Berberine bridge enzyme-like D-2 (566 aa).

Residues 1 to 33 (MKRNISMSLQRLLIILMMISFLFTSLLVPSVSA) form the signal peptide. Cysteines 42 and 103 form a disulfide. N50 carries N-linked (GlcNAc...) asparagine glycosylation. One can recognise an FAD-binding PCMH-type domain in the interval 81–257 (SKPKPTVIIV…YAWKIRLLKV (177 aa)). H118 carries the post-translational modification Pros-8alpha-FAD histidine. N364, N378, and N503 each carry an N-linked (GlcNAc...) asparagine glycan.

This sequence belongs to the oxygen-dependent FAD-linked oxidoreductase family. It depends on FAD as a cofactor.

It is found in the vacuole. It functions in the pathway alkaloid biosynthesis; nicotine biosynthesis. Its function is as follows. Involved in the biosynthesis of pyridine alkaloid natural products, leading mainly to the production of anabasine, anatabine, nicotine and nornicotine, effective deterrents against herbivores with antiparasitic and pesticide properties (neurotoxins); nornicotine serves as the precursor in the synthesis of the carcinogen compound N'-nitrosonornicotine (NNN). Catalyzes a late oxidation step subsequent to the pyridine ring condensation reaction in the biosynthesis of alkaloids. The sequence is that of Berberine bridge enzyme-like D-2 from Nicotiana tabacum (Common tobacco).